A 578-amino-acid polypeptide reads, in one-letter code: Rhamnogalacturonate lyase (578 aa).

Positions 1–27 (MHMNKPLQAWRTPLLTLIFVLPLTATG) are cleaved as a signal peptide.

Belongs to the polysaccharide lyase 4 family.

It localises to the secreted. The catalysed reaction is Endotype eliminative cleavage of L-alpha-rhamnopyranosyl-(1-&gt;4)-alpha-D-galactopyranosyluronic acid bonds of rhamnogalacturonan I domains in ramified hairy regions of pectin leaving L-rhamnopyranose at the reducing end and 4-deoxy-4,5-unsaturated D-galactopyranosyluronic acid at the non-reducing end.. Functionally, degrades the rhamnogalacturonan I (RG-I) backbone of pectin. Is required for the full virulence of E.chrysanthemi strain 3937 as it is involved in rotting of plant tissue. The chain is Rhamnogalacturonate lyase (rhiE) from Dickeya dadantii (strain 3937) (Erwinia chrysanthemi (strain 3937)).